We begin with the raw amino-acid sequence, 859 residues long: Linoleate 9S-lipoxygenase 1 (859 aa).

In terms of domain architecture, PLAT spans 21–161; it reads VKGTVVLMKK…HYTTDRVFFS (141 aa). One can recognise a Lipoxygenase domain in the interval 164-859; that stretch reads TYLPHETPAT…GRGIPNSVSI (696 aa). A disordered region spans residues 213 to 246; that stretch reads KNPRPVLGGTQEYPYPRRGRTGRKPTKEDPQTES. Residues His519, His524, His711, Asn715, and Ile859 each coordinate Fe cation.

This sequence belongs to the lipoxygenase family. As to quaternary structure, monomer. Requires Fe cation as cofactor. As to expression, seedlings, roots, leaves, and flowers (at protein level). Expressed in guard cells.

The protein localises to the cytoplasm. It catalyses the reaction (9Z,12Z)-octadecadienoate + O2 = (9S)-hydroperoxy-(10E,12Z)-octadecadienoate. It carries out the reaction (9Z,12Z,15Z)-octadecatrienoate + O2 = (9S)-hydroperoxy-(10E,12Z,15Z)-octadecatrienoate. It functions in the pathway lipid metabolism; oxylipin biosynthesis. Functionally, 9S-lipoxygenase that can use linoleic acid or linolenic acid as substrates. Plant lipoxygenases may be involved in a number of diverse aspects of plant physiology including growth and development, pest resistance, and senescence or responses to wounding. Catalyzes the hydroperoxidation of lipids containing a cis,cis-1,4-pentadiene structure. Function as regulators of root development by controlling the emergence of lateral roots. 9S-lypoxygenase-derived oxylipins may play an antagonistic role to ethylene signaling in the control of responses involving oxidative stress, lipid peroxidation and plant defense. LOX1-derived oxylipins may be involved in stress signaling from roots to shoots in response to cadmium exposure. 9S-lypoxygenase-derived oxylipins are engaged during infection to control the balance between salicylic acid (SA) and jasmonate (JA) signaling to facilitate infection by the fungal pathogen Fusarium graminearum. 9S-lypoxygenase-derived oxylipins activate brassinosteroid signaling to promote cell wall-based defense and limit pathogen infection. The LOX1-derived compound (9S)-hydroperoxy-(10E,12Z,15Z)-octadecatrienoate protects plant tissues against infection by the bacterial pathogen Pseudomonas syringae pv tomato DC3000. The LOX1-derived oxylipins are required to trigger stomatal closure in response to both infection by the bacterial pathogen Pseudomonas syringae pv tomato DC3000, and the pathogen-associated molecular pattern (PAMP) flagellin peptide flg22. Contributes to the oxidation of free fatty acids during seed aging. The protein is Linoleate 9S-lipoxygenase 1 of Arabidopsis thaliana (Mouse-ear cress).